We begin with the raw amino-acid sequence, 112 residues long: Urocortin-2 (112 aa).

The signal sequence occupies residues 1-22 (MTRCALLLLMVLMLGRVLVVPV). Positions 23–70 (TPIPTFQLRPQNSPQTTPRPAASESPSAAPTWPWAAQSHCSPTRHPGS) are excised as a propeptide. Residues 27–66 (TFQLRPQNSPQTTPRPAASESPSAAPTWPWAAQSHCSPTR) form a disordered region. Over residues 38–58 (TTPRPAASESPSAAPTWPWAA) the composition is skewed to low complexity.

It belongs to the sauvagine/corticotropin-releasing factor/urotensin I family. As to quaternary structure, binds with high affinity to CRF receptors 2-alpha and 2-beta. In terms of processing, glycosylated.

It localises to the secreted. Functionally, suppresses food intake, delays gastric emptying and decreases heat-induced edema. Might represent an endogenous ligand for maintaining homeostasis after stress. This Homo sapiens (Human) protein is Urocortin-2 (UCN2).